Here is a 442-residue protein sequence, read N- to C-terminus: Protein translocase subunit SecF (442 aa).

The disordered stretch occupies residues 1–39; sequence MASKAKTGRDDEATSAVELTEATESAVARTDGDSTTDTA. The next 6 membrane-spanning stretches (helical) occupy residues 67 to 87, 187 to 207, 218 to 238, 243 to 263, 301 to 321, and 331 to 351; these read WFGV…FRGF, ITKK…LYIT, AITA…LVGF, ATVI…VIVF, LIGV…LGVG, and LIGI…LLVT. Residues 366–442 are disordered; sequence VLKRRNSGSP…PTGKRNAGRR (77 aa). The segment covering 402–432 has biased composition (low complexity); that stretch reads QASSQSAPRAAQGSSKPAPGARPVRPVGTRR. Residues 433 to 442 are compositionally biased toward basic residues; that stretch reads PTGKRNAGRR.

Belongs to the SecD/SecF family. SecF subfamily. Forms a complex with SecD. Part of the essential Sec protein translocation apparatus which comprises SecA, SecYEG and auxiliary proteins SecDF. Other proteins may also be involved.

The protein resides in the cell membrane. Its function is as follows. Part of the Sec protein translocase complex. Interacts with the SecYEG preprotein conducting channel. SecDF uses the proton motive force (PMF) to complete protein translocation after the ATP-dependent function of SecA. The polypeptide is Protein translocase subunit SecF (Mycobacterium tuberculosis (strain ATCC 25618 / H37Rv)).